We begin with the raw amino-acid sequence, 277 residues long: Cis-2,3-dihydrobiphenyl-2,3-diol dehydrogenase (277 aa).

NAD(+) is bound at residue 9-33 (LITGGASGLGRALVDRFVAERAKVA). Residue Ser142 participates in substrate binding. Tyr155 (proton acceptor) is an active-site residue.

The protein belongs to the short-chain dehydrogenases/reductases (SDR) family. Homotetramer.

It catalyses the reaction (2R,3S)-3-phenylcyclohexa-3,5-diene-1,2-diol + NAD(+) = biphenyl-2,3-diol + NADH + H(+). The protein operates within xenobiotic degradation; biphenyl degradation; 2-hydroxy-2,4-pentadienoate and benzoate from biphenyl: step 2/4. This is Cis-2,3-dihydrobiphenyl-2,3-diol dehydrogenase (bphB) from Pseudomonas putida (Arthrobacter siderocapsulatus).